Consider the following 404-residue polypeptide: MTTQLPNSFRSGPDERGHFGIFGGRFVAETLMPLILDLEKAYAGAKADPSFQREMDGYLKDYVGRPSPLYFAERLTDHLGGAKIYFKREELNHTGSHKVNNVLGQIMVARRMGKKRIIAETGAGQHGVATATLCARFGLECIVFMGAVDVERQQPNVIRMQMLGAKVVPVQSGARTLKDAMNEALRDWVTNVSDTFYCIGTAAGPHPYPMMVRDFQSIIGTETKTQMQAAEGRLPDSLVACIGGGSNALGLFHPFLDDPTVEIFGVEAAGHGLTQLHAASIAGGRPGVLHGNRTYLLMDDDGQIQEGHSISAGLDYPGIGPEHSWLHETGRVTYLSATDDEALAAFQLLSRLEGIIPALEPAHAIAKVLELAPQRPKDHLMVINLSGRGDKDIPQVAEILRGQK.

At K98 the chain carries N6-(pyridoxal phosphate)lysine.

This sequence belongs to the TrpB family. As to quaternary structure, tetramer of two alpha and two beta chains. Pyridoxal 5'-phosphate serves as cofactor.

The catalysed reaction is (1S,2R)-1-C-(indol-3-yl)glycerol 3-phosphate + L-serine = D-glyceraldehyde 3-phosphate + L-tryptophan + H2O. Its pathway is amino-acid biosynthesis; L-tryptophan biosynthesis; L-tryptophan from chorismate: step 5/5. The beta subunit is responsible for the synthesis of L-tryptophan from indole and L-serine. The protein is Tryptophan synthase beta chain of Rhodopseudomonas palustris (strain BisB18).